The sequence spans 101 residues: Small ribosomal subunit protein uS14 (101 aa).

Over residues 1–10 (MAKKSAIEKN) the composition is skewed to basic and acidic residues. Residues 1 to 23 (MAKKSAIEKNNRRKKMTKNAAPK) are disordered. A compositionally biased stretch (basic residues) spans 11 to 23 (NRRKKMTKNAAPK).

Belongs to the universal ribosomal protein uS14 family. Part of the 30S ribosomal subunit. Contacts proteins S3 and S10.

Its function is as follows. Binds 16S rRNA, required for the assembly of 30S particles and may also be responsible for determining the conformation of the 16S rRNA at the A site. The chain is Small ribosomal subunit protein uS14 from Rhodopseudomonas palustris (strain TIE-1).